The sequence spans 195 residues: Imidazoleglycerol-phosphate dehydratase (195 aa).

The protein belongs to the imidazoleglycerol-phosphate dehydratase family.

It is found in the cytoplasm. The enzyme catalyses D-erythro-1-(imidazol-4-yl)glycerol 3-phosphate = 3-(imidazol-4-yl)-2-oxopropyl phosphate + H2O. It participates in amino-acid biosynthesis; L-histidine biosynthesis; L-histidine from 5-phospho-alpha-D-ribose 1-diphosphate: step 6/9. The polypeptide is Imidazoleglycerol-phosphate dehydratase (Heliobacterium modesticaldum (strain ATCC 51547 / Ice1)).